A 216-amino-acid polypeptide reads, in one-letter code: Transmembrane protein 163a (216 aa).

Over 1 to 15 (MRLKPHEAQSYRKKA) the chain is Cytoplasmic. A helical membrane pass occupies residues 16–36 (LWVSWISIVVTLILAVAGFTV). Topologically, residues 37–43 (SFMRHSA) are extracellular. A helical transmembrane segment spans residues 44–64 (SAFGFAFDATLDVLSSIIVLW). Residues 65-77 (RYSNAAAVHSAHR) lie on the Cytoplasmic side of the membrane. The helical transmembrane segment at 78 to 98 (EYIACVILGVIFILSSLCILG) threads the bilayer. The Extracellular segment spans residues 99–114 (KAIHDLATKLLPEVDD). Residues 115-135 (FLFSVSIVSGLMCVILAVAKF) form a helical membrane-spanning segment. Residues 136–144 (MLGRILTSR) lie on the Cytoplasmic side of the membrane. The helical transmembrane segment at 145–165 (ALITDGFNSMVGGIMGFSILI) threads the bilayer. Over 166 to 182 (SAEVFRHYPNVWYLDGT) the chain is Extracellular. The helical transmembrane segment at 183 to 203 (IGILIGLVIQAYGVKLLVDMI) threads the bilayer. Topologically, residues 204–216 (PRVRQTRNYERFE) are cytoplasmic.

It belongs to the TMEM163 family.

The protein resides in the cytoplasmic vesicle. Its subcellular location is the secretory vesicle. The protein localises to the synaptic vesicle membrane. It is found in the early endosome membrane. It localises to the late endosome membrane. The protein resides in the lysosome membrane. Its subcellular location is the cell membrane. It carries out the reaction Zn(2+)(in) = Zn(2+)(out). Functionally, zinc ion transporter that mediates zinc efflux and plays a crucial role in intracellular zinc homeostasis. Binds the divalent cations Zn(2+), Ni(2+), and to a minor extent Cu(2+). Is a functional modulator of P2X purinoceptors, including P2RX1, P2RX3, P2RX4 and P2RX7. Plays a role in central nervous system development and is required for myelination, and survival and proliferation of oligodendrocytes. The sequence is that of Transmembrane protein 163a from Danio rerio (Zebrafish).